The sequence spans 457 residues: Putative HD domain-containing protein L394 (457 aa).

The region spanning 65 to 206 is the HD domain; that stretch reads RLEHSIGVYD…GIDVDKFDYL (142 aa).

This chain is Putative HD domain-containing protein L394, found in Acanthamoeba polyphaga mimivirus (APMV).